A 792-amino-acid chain; its full sequence is Phenylalanine--tRNA ligase beta subunit (792 aa).

Residues 39 to 147 (GESLGQVVVA…DDAPVGQALA (109 aa)) form the tRNA-binding domain. The 76-residue stretch at 400 to 475 (PQPVHIRLRR…RIHGYDRVPT (76 aa)) folds into the B5 domain. The Mg(2+) site is built by aspartate 453, aspartate 459, glutamate 462, and glutamate 463. Residues 698–791 (SRFPSVRRDL…IEREHRARIR (94 aa)) enclose the FDX-ACB domain.

It belongs to the phenylalanyl-tRNA synthetase beta subunit family. Type 1 subfamily. As to quaternary structure, tetramer of two alpha and two beta subunits. Mg(2+) is required as a cofactor.

It is found in the cytoplasm. It carries out the reaction tRNA(Phe) + L-phenylalanine + ATP = L-phenylalanyl-tRNA(Phe) + AMP + diphosphate + H(+). The polypeptide is Phenylalanine--tRNA ligase beta subunit (Xanthomonas axonopodis pv. citri (strain 306)).